Consider the following 763-residue polypeptide: Forkhead box protein M1 (763 aa).

A disordered region spans residues 1–53 (MKTSPRRPLILKRRRLPLPVQNAPSETSEEEPKRSPAQQESNQAEASKEVAES). Positions 36 to 45 (PAQQESNQAE) are enriched in polar residues. Glycyl lysine isopeptide (Lys-Gly) (interchain with G-Cter in SUMO2) cross-links involve residues Lys-163, Lys-201, and Lys-325. The tract at residues 198-232 (RSIKQEMEEKENCHLEQRQVKVEEPSRPSASWQNS) is disordered. Basic and acidic residues predominate over residues 200–223 (IKQEMEEKENCHLEQRQVKVEEPS). The fork-head DNA-binding region spans 235–327 (ERPPYSYMAM…LTLDQVFKPL (93 aa)). Residues 329–351 (PGSPQLPEHLESQQKRPNPELRR) are disordered. A Phosphoserine modification is found at Ser-331. Basic and acidic residues predominate over residues 336-351 (EHLESQQKRPNPELRR). Lys-356 participates in a covalent cross-link: Glycyl lysine isopeptide (Lys-Gly) (interchain with G-Cter in SUMO2). A Phosphoserine; by CHEK2 modification is found at Ser-376. Glycyl lysine isopeptide (Lys-Gly) (interchain with G-Cter in SUMO2) cross-links involve residues Lys-422 and Lys-440. The interval 482–711 (PPLEEWPSPA…PGSPEPQVSG (230 aa)) is disordered. Position 489 is a phosphoserine; by GSK3 (Ser-489). Basic and acidic residues predominate over residues 494 to 503 (FKEESSHSWE). Phosphoserine is present on Ser-522. Positions 583–592 (DPASQLSYSQ) are enriched in polar residues. Phosphothreonine; by CDK1 is present on Thr-611. Residues Thr-620, Thr-627, and Thr-662 each carry the phosphothreonine modification. A Phosphoserine; by CDK1 modification is found at Ser-693. 2 positions are modified to phosphoserine; by PLK1: Ser-730 and Ser-739.

As to quaternary structure, interacts with PINT87aa which is encoded by the circular form of the long non-coding RNA LINC-PINT; the interaction inhibits FOXM1-mediated transcription of PHB2. In terms of processing, phosphorylated in M (mitotic) phase. Phosphorylation by the checkpoint kinase CHEK2 in response to DNA damage increases the FOXM1 protein stability probably stimulating the transcription of genes involved in DNA repair. Phosphorylated by CDK1 in late S and G2 phases, creating docking sites for the POLO box domains of PLK1. Subsequently, PLK1 binds and phosphorylates FOXM1, leading to activation of transcriptional activity and subsequent enhanced expression of key mitotic regulators. Phosphorylated by GSK3B leading to ubiquitination and proteasomal degradation. Ubiquitinated in a FBXW7-dependent manner leading to proteasomal degradation. As to expression, expressed in thymus, testis, small intestine, colon followed by ovary. Appears to be expressed only in adult organs containing proliferating/cycling cells or in response to growth factors. Also expressed in epithelial cell lines derived from tumors. Not expressed in resting cells. Isoform 2 is highly expressed in testis.

Its subcellular location is the nucleus. Functionally, transcription factor regulating the expression of cell cycle genes essential for DNA replication and mitosis. Plays a role in the control of cell proliferation. Also plays a role in DNA break repair, participating in the DNA damage checkpoint response. Promotes transcription of PHB2. In Homo sapiens (Human), this protein is Forkhead box protein M1 (FOXM1).